We begin with the raw amino-acid sequence, 186 residues long: MSAEFDISDLKRRMQGAIATLKHELGGLRTGRATASLLEPVHVDAYGQSLPLNQVATISVAEARMLSVQVWDKGMVGPVDKAIRDSNLGLSPTVEGQILRIRIPELNEQRRKEMAKVAHKYAEEAKVAVRHVRRDGIDTLKKLLKDKAIGEDDEKRHAAEIQKVTDQFVGEVDQALAAKEKEIMQV.

It belongs to the RRF family.

It is found in the cytoplasm. In terms of biological role, responsible for the release of ribosomes from messenger RNA at the termination of protein biosynthesis. May increase the efficiency of translation by recycling ribosomes from one round of translation to another. This is Ribosome-recycling factor from Beijerinckia indica subsp. indica (strain ATCC 9039 / DSM 1715 / NCIMB 8712).